The following is a 251-amino-acid chain: Probable ATP-dependent transporter ycf16 (251 aa).

The ABC transporter domain occupies 7–251; sequence LNIKNLDVTI…EKYGYDYLNK (245 aa). 39 to 46 serves as a coordination point for ATP; that stretch reads GKNGSGKS.

The protein belongs to the ABC transporter superfamily. Ycf16 family.

Its subcellular location is the plastid. The protein resides in the chloroplast. The chain is Probable ATP-dependent transporter ycf16 (ycf16) from Antithamnion sp. (Red alga).